Here is a 464-residue protein sequence, read N- to C-terminus: ATP-dependent protease ATPase subunit HslU (464 aa).

ATP is bound by residues Ile-22, 64 to 69 (GVGKTE), Asp-275, Glu-340, and Arg-412.

This sequence belongs to the ClpX chaperone family. HslU subfamily. A double ring-shaped homohexamer of HslV is capped on each side by a ring-shaped HslU homohexamer. The assembly of the HslU/HslV complex is dependent on binding of ATP.

The protein localises to the cytoplasm. Functionally, ATPase subunit of a proteasome-like degradation complex; this subunit has chaperone activity. The binding of ATP and its subsequent hydrolysis by HslU are essential for unfolding of protein substrates subsequently hydrolyzed by HslV. HslU recognizes the N-terminal part of its protein substrates and unfolds these before they are guided to HslV for hydrolysis. This chain is ATP-dependent protease ATPase subunit HslU, found in Cytophaga hutchinsonii (strain ATCC 33406 / DSM 1761 / CIP 103989 / NBRC 15051 / NCIMB 9469 / D465).